The sequence spans 338 residues: MTTLRLLISDSYDPWFNLAVEECIFRQMPATQRVLFLWRNADTVVIGRAQNPWKECNTRRMEEDNVRLARRSSGGGAVFHDLGNTCFTFMAGKPEYDKTISTHIVLAALNSLGVMADASGRNDLVVKTPDGDRKVSGSAYRETKDRGFHHGTLLLNADLSRLANYLNPDKKKLAAKGITSVRSRVANLTELLPGITHEQVCQAVTEAFFAHYGERVDAEVISPDKTPDLPNFAETFARQSSWEWNFGQAPAFSHLLDEHFTWGGVELHFDVEKGVITRAQVFTDSLNPAPLEALAGRLQGCQYRADVLEQACKSLIAEFPAQKGELRELAAWMAQAVR.

The 188-residue stretch at 29–216 folds into the BPL/LPL catalytic domain; the sequence is PATQRVLFLW…AFFAHYGERV (188 aa). Residues Arg-71, 76–79, and Lys-134 each bind ATP; that span reads GAVF. Lys-134 is a (R)-lipoate binding site.

This sequence belongs to the LplA family. Monomer.

The protein localises to the cytoplasm. It carries out the reaction L-lysyl-[lipoyl-carrier protein] + (R)-lipoate + ATP = N(6)-[(R)-lipoyl]-L-lysyl-[lipoyl-carrier protein] + AMP + diphosphate + H(+). It participates in protein modification; protein lipoylation via exogenous pathway; protein N(6)-(lipoyl)lysine from lipoate: step 1/2. It functions in the pathway protein modification; protein lipoylation via exogenous pathway; protein N(6)-(lipoyl)lysine from lipoate: step 2/2. In terms of biological role, catalyzes both the ATP-dependent activation of exogenously supplied lipoate to lipoyl-AMP and the transfer of the activated lipoyl onto the lipoyl domains of lipoate-dependent enzymes. The protein is Lipoate-protein ligase A of Salmonella choleraesuis (strain SC-B67).